The sequence spans 716 residues: Fatty acid oxidation complex subunit alpha (716 aa).

Positions 1–189 (MIYQSPTIQV…KVGAIDAVVA (189 aa)) are enoyl-CoA hydratase/isomerase. Residue Asp-296 coordinates substrate. A 3-hydroxyacyl-CoA dehydrogenase region spans residues 311–716 (KNIDTAAVLG…AANNGSYYQS (406 aa)). NAD(+) is bound by residues Met-324, Asp-343, 400 to 402 (VVE), Lys-407, and Ser-429. Residue His-450 is the For 3-hydroxyacyl-CoA dehydrogenase activity of the active site. Position 453 (Asn-453) interacts with NAD(+). Asn-500 is a binding site for substrate.

This sequence in the N-terminal section; belongs to the enoyl-CoA hydratase/isomerase family. In the C-terminal section; belongs to the 3-hydroxyacyl-CoA dehydrogenase family. In terms of assembly, heterotetramer of two alpha chains (FadB) and two beta chains (FadA).

It carries out the reaction a (3S)-3-hydroxyacyl-CoA + NAD(+) = a 3-oxoacyl-CoA + NADH + H(+). The enzyme catalyses a (3S)-3-hydroxyacyl-CoA = a (2E)-enoyl-CoA + H2O. The catalysed reaction is a 4-saturated-(3S)-3-hydroxyacyl-CoA = a (3E)-enoyl-CoA + H2O. It catalyses the reaction (3S)-3-hydroxybutanoyl-CoA = (3R)-3-hydroxybutanoyl-CoA. It carries out the reaction a (3Z)-enoyl-CoA = a 4-saturated (2E)-enoyl-CoA. The enzyme catalyses a (3E)-enoyl-CoA = a 4-saturated (2E)-enoyl-CoA. It participates in lipid metabolism; fatty acid beta-oxidation. Functionally, involved in the aerobic and anaerobic degradation of long-chain fatty acids via beta-oxidation cycle. Catalyzes the formation of 3-oxoacyl-CoA from enoyl-CoA via L-3-hydroxyacyl-CoA. It can also use D-3-hydroxyacyl-CoA and cis-3-enoyl-CoA as substrate. In Shewanella sediminis (strain HAW-EB3), this protein is Fatty acid oxidation complex subunit alpha.